The primary structure comprises 539 residues: Chaperonin GroEL (539 aa).

Residues 29–32 (TLGP), 86–90 (DGTTT), Gly-413, 477–479 (DAL), and Asp-493 contribute to the ATP site.

Belongs to the chaperonin (HSP60) family. Forms a cylinder of 14 subunits composed of two heptameric rings stacked back-to-back. Interacts with the co-chaperonin GroES.

It is found in the cytoplasm. The catalysed reaction is ATP + H2O + a folded polypeptide = ADP + phosphate + an unfolded polypeptide.. Its function is as follows. Together with its co-chaperonin GroES, plays an essential role in assisting protein folding. The GroEL-GroES system forms a nano-cage that allows encapsulation of the non-native substrate proteins and provides a physical environment optimized to promote and accelerate protein folding. The chain is Chaperonin GroEL from Clostridium perfringens (strain ATCC 13124 / DSM 756 / JCM 1290 / NCIMB 6125 / NCTC 8237 / Type A).